We begin with the raw amino-acid sequence, 662 residues long: tRNA 5-methylaminomethyl-2-thiouridine biosynthesis bifunctional protein MnmC (662 aa).

Residues 1-245 (MKQNAIQPAN…KREMLTGEMA (245 aa)) form a tRNA (mnm(5)s(2)U34)-methyltransferase region. The tract at residues 270–662 (IGGGIASALL…RKLLKGKAVK (393 aa)) is FAD-dependent cmnm(5)s(2)U34 oxidoreductase.

It in the N-terminal section; belongs to the methyltransferase superfamily. tRNA (mnm(5)s(2)U34)-methyltransferase family. In the C-terminal section; belongs to the DAO family. Requires FAD as cofactor.

The protein localises to the cytoplasm. It catalyses the reaction 5-aminomethyl-2-thiouridine(34) in tRNA + S-adenosyl-L-methionine = 5-methylaminomethyl-2-thiouridine(34) in tRNA + S-adenosyl-L-homocysteine + H(+). Catalyzes the last two steps in the biosynthesis of 5-methylaminomethyl-2-thiouridine (mnm(5)s(2)U) at the wobble position (U34) in tRNA. Catalyzes the FAD-dependent demodification of cmnm(5)s(2)U34 to nm(5)s(2)U34, followed by the transfer of a methyl group from S-adenosyl-L-methionine to nm(5)s(2)U34, to form mnm(5)s(2)U34. This chain is tRNA 5-methylaminomethyl-2-thiouridine biosynthesis bifunctional protein MnmC, found in Klebsiella pneumoniae subsp. pneumoniae (strain ATCC 700721 / MGH 78578).